Here is a 530-residue protein sequence, read N- to C-terminus: PC4 and SFRS1-interacting protein (530 aa).

One can recognise a PWWP domain in the interval 1–64; the sequence is MTRDFKPGDL…PKDIFPYSEN (64 aa). Residue K75 forms a Glycyl lysine isopeptide (Lys-Gly) (interchain with G-Cter in SUMO2) linkage. The tract at residues 86–349 is disordered; it reads NNPKVKFSSQ…VEKKRETSMD (264 aa). The span at 92–104 shows a compositional bias: polar residues; that stretch reads FSSQQASTKQSNA. Phosphoserine occurs at positions 102, 105, and 106. Residues 113–135 show a composition bias toward basic and acidic residues; the sequence is KETSVSKEDTDHEEKASNEDVTK. Phosphothreonine occurs at positions 115 and 122. Phosphoserine is present on S129. Phosphothreonine is present on T141. Residues 144-153 are compositionally biased toward basic residues; that stretch reads AARRGRKRKA. The Nuclear localization signal signature appears at 146–156; the sequence is RRGRKRKAEKQ. Phosphothreonine is present on T167. Phosphoserine is present on residues S177 and S206. Basic and acidic residues predominate over residues 213-261; that stretch reads EEDKSKKKGQEEKQPKKQLKKDEEGQKEEDKPRKEPDKKEGKKEVESKR. S271 carries the phosphoserine modification. At T272 the chain carries Phosphothreonine. Phosphoserine is present on residues S273 and S275. Acidic residues predominate over residues 274 to 283; the sequence is DSEEEGDDQE. Over residues 287 to 302 the composition is skewed to basic residues; that stretch reads KRKGGRNFQTAHRRNM. Over residues 305 to 349 the composition is skewed to basic and acidic residues; sequence GQHEKEAADRKRKQEEQMETEQQNKDEGKKPEVKKVEKKRETSMD. 2 coiled-coil regions span residues 306-334 and 371-395; these read QHEKEAADRKRKQEEQMETEQQNKDEGKK and NRCIEALDELASLQVTMQQAQKHTE. The segment at 340–417 is integrase-binding domain (IBD); the sequence is VEKKRETSMD…VSQIIMEKST (78 aa). S434 carries the post-translational modification Phosphoserine. T437 carries the post-translational modification Phosphothreonine. Phosphoserine is present on S443. Basic and acidic residues predominate over residues 446-473; that stretch reads EQRQHEEANKTKDQGKKGPNKKLDKEQT. The segment at 446 to 530 is disordered; that stretch reads EQRQHEEANK…ISLKDSTLDN (85 aa). A compositionally biased stretch (polar residues) spans 474–494; the sequence is GSKTLNGGSDAPDSNQAQHNG. The segment covering 498–530 has biased composition (basic and acidic residues); that stretch reads EESKDKHEASSKKKPSNEERETEISLKDSTLDN. Position 517 is a citrulline (R517). S522 carries the phosphoserine modification. At T527 the chain carries Phosphothreonine.

This sequence belongs to the HDGF family. As to quaternary structure, monomer. Interacts with IFRD1/PC4. Interacts (via IBD domain) with POGZ (via IBM motif) and CDCA7L (via IBM motifs). Interacts (via IBD domain) with KMT2A (via IBM motifs) with a moderate affinity whereas interacts with the KMT2A-MEN1 complex with a greater affinity; MEN1 enhances interaction of KMT2A with PSIP1. Interacts (via IBD domain) with IWS1 (via IBM motif), MED1 (via IBM motif) and DBF4 (via IBM motifs). In terms of assembly, (Microbial infection) Interacts (via IBD domain) with feline immunodeficiency virus (FIV) integrase (IN), determining its nuclear localization, its tight association with chromatin and its protection from the proteasome. In terms of processing, citrullinated by PADI4.

The protein resides in the nucleus. Transcriptional coactivator involved in neuroepithelial stem cell differentiation and neurogenesis. Involved in particular in lens epithelial cell gene regulation and stress responses. May play an important role in lens epithelial to fiber cell terminal differentiation. May play a protective role during stress-induced apoptosis. The chain is PC4 and SFRS1-interacting protein (PSIP1) from Felis catus (Cat).